Reading from the N-terminus, the 129-residue chain is Small ribosomal subunit protein uS11 (129 aa).

It belongs to the universal ribosomal protein uS11 family. In terms of assembly, part of the 30S ribosomal subunit. Interacts with proteins S7 and S18. Binds to IF-3.

Its function is as follows. Located on the platform of the 30S subunit, it bridges several disparate RNA helices of the 16S rRNA. Forms part of the Shine-Dalgarno cleft in the 70S ribosome. This chain is Small ribosomal subunit protein uS11, found in Vibrio campbellii (strain ATCC BAA-1116).